The sequence spans 372 residues: DNA replication and repair protein RecF (372 aa).

Residue 30–37 (GANGQGKT) coordinates ATP.

It belongs to the RecF family.

It localises to the cytoplasm. Its function is as follows. The RecF protein is involved in DNA metabolism; it is required for DNA replication and normal SOS inducibility. RecF binds preferentially to single-stranded, linear DNA. It also seems to bind ATP. The polypeptide is DNA replication and repair protein RecF (Heliobacterium modesticaldum (strain ATCC 51547 / Ice1)).